The sequence spans 450 residues: RUN domain-containing protein 3B (450 aa).

Residues 48–180 (DDTSAEFINF…IDFSFCLKGE (133 aa)) enclose the RUN domain. Positions 203–225 (DSISSDEEEMRTLGSSGSEAGTP) are disordered. The stretch at 291-317 (ISHKLEKEQLEIIILELQDQLTVLKNH) forms a coiled coil.

Belongs to the RUNDC3 family.

In Danio rerio (Zebrafish), this protein is RUN domain-containing protein 3B (rundc3b).